The chain runs to 679 residues: Methionine--tRNA ligase (679 aa).

Residues Cys-147, Cys-150, Cys-160, and Cys-163 each contribute to the Zn(2+) site. Residues 332 to 336 (KISTS) carry the 'KMSKS' region motif. Position 335 (Thr-335) interacts with ATP. A tRNA-binding domain is found at 578–679 (DFMKLDIRVG…REVKPGSEVK (102 aa)).

The protein belongs to the class-I aminoacyl-tRNA synthetase family. MetG type 1 subfamily. Homodimer. The cofactor is Zn(2+).

It is found in the cytoplasm. It catalyses the reaction tRNA(Met) + L-methionine + ATP = L-methionyl-tRNA(Met) + AMP + diphosphate. Is required not only for elongation of protein synthesis but also for the initiation of all mRNA translation through initiator tRNA(fMet) aminoacylation. This chain is Methionine--tRNA ligase, found in Bacteroides fragilis (strain YCH46).